Consider the following 55-residue polypeptide: Large ribosomal subunit protein bL33 (55 aa).

The protein belongs to the bacterial ribosomal protein bL33 family.

The polypeptide is Large ribosomal subunit protein bL33 (Acidiphilium cryptum (strain JF-5)).